We begin with the raw amino-acid sequence, 476 residues long: Glycogen synthase (476 aa).

Position 15 (lysine 15) interacts with ADP-alpha-D-glucose.

This sequence belongs to the glycosyltransferase 1 family. Bacterial/plant glycogen synthase subfamily.

The enzyme catalyses [(1-&gt;4)-alpha-D-glucosyl](n) + ADP-alpha-D-glucose = [(1-&gt;4)-alpha-D-glucosyl](n+1) + ADP + H(+). It functions in the pathway glycan biosynthesis; glycogen biosynthesis. Synthesizes alpha-1,4-glucan chains using ADP-glucose. The sequence is that of Glycogen synthase from Streptococcus mutans serotype c (strain ATCC 700610 / UA159).